Reading from the N-terminus, the 110-residue chain is ATP synthase epsilon chain (110 aa).

It belongs to the ATPase epsilon chain family. As to quaternary structure, F-type ATPases have 2 components, CF(1) - the catalytic core - and CF(0) - the membrane proton channel. CF(1) has five subunits: alpha(3), beta(3), gamma(1), delta(1), epsilon(1). CF(0) has three main subunits: a, b and c.

It is found in the cell inner membrane. Functionally, produces ATP from ADP in the presence of a proton gradient across the membrane. This Rickettsia typhi (strain ATCC VR-144 / Wilmington) protein is ATP synthase epsilon chain.